A 1033-amino-acid polypeptide reads, in one-letter code: E3 ubiquitin-protein ligase Topors (1033 aa).

The span at 1–10 (MGSQPPPPGS) shows a compositional bias: pro residues. The tract at residues 1–36 (MGSQPPPPGSPLSREEGEAPPLVPAEEGRRRSRRVR) is disordered. A required for DNA-binding region spans residues 52 to 376 (ELASNGPAVP…MAAFDQHANY (325 aa)). Glycyl lysine isopeptide (Lys-Gly) (interchain with G-Cter in SUMO2) cross-links involve residues Lys74, Lys77, Lys84, and Lys89. Residue Ser99 is modified to Phosphoserine. The RING-type zinc-finger motif lies at 104 to 143 (CPICLDRFDNVSYLDRCLHKFCFRCVQEWSKNKAECPLCK). Lys160 participates in a covalent cross-link: Glycyl lysine isopeptide (Lys-Gly) (interchain with G-Cter in SUMO2). A Phosphoserine modification is found at Ser196. Residue Lys251 forms a Glycyl lysine isopeptide (Lys-Gly) (interchain with G-Cter in SUMO2) linkage. 2 disordered regions span residues 414 to 477 (QAPW…SSSD) and 496 to 692 (VELS…RYYL). Over residues 434 to 444 (VGVSSLLNSSD) the composition is skewed to low complexity. The interval 438-574 (SLLNSSDSSD…RSTSLPAPRD (137 aa)) is sumoylation and localization to discrete nuclear foci. The interaction with SUMO1 stretch occupies residues 438-654 (SLLNSSDSSD…RSRTRDSSWS (217 aa)). The span at 455–464 (TTSQIQGVQT) shows a compositional bias: polar residues. The tract at residues 457 to 731 (SQIQGVQTND…RRTLSRAHYS (275 aa)) is interaction with p53/TP53. The tract at residues 457 to 879 (SQIQGVQTND…GKATDTSKHH (423 aa)) is interaction with TOP1. Residues 465–477 (NDDVNNDSDSSSD) are compositionally biased toward low complexity. Ser500 carries the post-translational modification Phosphoserine. Positions 507-518 (PYEKVETVKTQE) are enriched in basic and acidic residues. Low complexity predominate over residues 522–535 (SYSSGDSDVSRASS). Over residues 540–566 (LGKDEQMSKSHCDSDTRISSKKEEKRS) the composition is skewed to basic and acidic residues. Lys561 is covalently cross-linked (Glycyl lysine isopeptide (Lys-Gly) (interchain with G-Cter in SUMO)). Residue Ser585 is modified to Phosphoserine. Basic residues-rich tracts occupy residues 613–629 (RNHR…KRSR) and 637–647 (PRARKDKKRSR). The segment covering 654–669 (SRRSQTLSLSSGSTSR) has biased composition (low complexity). Lys701 participates in a covalent cross-link: Glycyl lysine isopeptide (Lys-Gly) (interchain with G-Cter in SUMO2). Disordered regions lie at residues 713-934 (RDGY…PIQD) and 970-1033 (TVEN…CDVS). A Phosphoserine; by PLK1 modification is found at Ser718. Residues 721-730 (RRRTLSRAHY) are compositionally biased toward basic residues. Positions 731–747 (SRQSSSPEFRIQSFSER) are enriched in polar residues. Position 734 is a phosphoserine (Ser734). Residues 770 to 780 (SVSSNRSRTTS) are compositionally biased toward low complexity. The span at 815-837 (FTSKGKDSHYQKSKLDGSYKNES) shows a compositional bias: basic and acidic residues. Residues Lys818 and Lys834 each participate in a glycyl lysine isopeptide (Lys-Gly) (interchain with G-Cter in SUMO2) cross-link. Residues 851–860 (KHKRRRRRTR) are compositionally biased toward basic residues. An interaction with UBE2I region spans residues 851-914 (KHKRRRRRTR…ITIDSDSDGE (64 aa)). Ser861 and Ser863 each carry phosphoserine. Residues 877 to 894 (KHHKKKKKKHKKKHKKHH) are compositionally biased toward basic residues. Ser909, Ser911, Ser999, Ser1016, and Ser1025 each carry phosphoserine. A compositionally biased stretch (polar residues) spans 992 to 1008 (TFASDLESQSSNVSIQA).

Interacts with TOP1. Interacts with the SUMO1 conjugating enzyme UBE2I. Interacts with SUMO1. Interacts with NKX3-1; polyubiquitinates NKX3-1 and induces its proteasomal degradation. Interacts with SIN3A; sumoylates SIN3A. Interacts with IKBKE; induced by DNA damage. Interacts with p53/TP53. Interacts with PARK7/DJ-1. Post-translationally, phosphorylation at Ser-99 regulates the E3 ubiquitin-protein ligase activity but not the SUMO1-protein ligase activity. Phosphorylation at Ser-718 increases the E3 ubiquitin-protein ligase activity versus the E3 SUMO1-protein ligase activity resulting in increased p53/TP53 ubiquitination and degradation. Sumoylated.

The protein localises to the nucleus. It is found in the PML body. It catalyses the reaction S-ubiquitinyl-[E2 ubiquitin-conjugating enzyme]-L-cysteine + [acceptor protein]-L-lysine = [E2 ubiquitin-conjugating enzyme]-L-cysteine + N(6)-ubiquitinyl-[acceptor protein]-L-lysine.. Functionally, functions as an E3 ubiquitin-protein ligase and as a E3 SUMO1-protein ligase. Probable tumor suppressor involved in cell growth, cell proliferation and apoptosis that regulates p53/TP53 stability through ubiquitin-dependent degradation. May regulate chromatin modification through sumoylation of several chromatin modification-associated proteins. May be involved in DNA-damage-induced cell death through IKBKE sumoylation. The chain is E3 ubiquitin-protein ligase Topors (Topors) from Mus musculus (Mouse).